The sequence spans 493 residues: Amidophosphoribosyltransferase (493 aa).

Positions 1–26 (MIPTQPLTADLDCDLGLERPDRPEEA) are excised as a propeptide. The Nucleophile role is filled by Cys-27. One can recognise a Glutamine amidotransferase type-2 domain in the interval 27 to 252 (CGVFALYAPG…PGEMVRITDA (226 aa)). A [4Fe-4S] cluster-binding site is contributed by Cys-268. Mg(2+) is bound by residues Ser-315, Asp-377, and Asp-378. Cys-414, Cys-465, and Cys-468 together coordinate [4Fe-4S] cluster.

In the C-terminal section; belongs to the purine/pyrimidine phosphoribosyltransferase family. Mg(2+) is required as a cofactor. It depends on [4Fe-4S] cluster as a cofactor.

The enzyme catalyses 5-phospho-beta-D-ribosylamine + L-glutamate + diphosphate = 5-phospho-alpha-D-ribose 1-diphosphate + L-glutamine + H2O. It functions in the pathway purine metabolism; IMP biosynthesis via de novo pathway; N(1)-(5-phospho-D-ribosyl)glycinamide from 5-phospho-alpha-D-ribose 1-diphosphate: step 1/2. Its function is as follows. Catalyzes the formation of phosphoribosylamine from phosphoribosylpyrophosphate (PRPP) and glutamine. The chain is Amidophosphoribosyltransferase from Synechococcus elongatus (strain ATCC 33912 / PCC 7942 / FACHB-805) (Anacystis nidulans R2).